Consider the following 520-residue polypeptide: Hydroxymethylglutaryl-CoA synthase, cytoplasmic (520 aa).

At Ser-4 the chain carries Phosphoserine. Asp-43 and Ala-44 together coordinate (3S)-3-hydroxy-3-methylglutaryl-CoA. Residue 44–46 (AGK) coordinates CoA. Residue Lys-46 is modified to N6-acetyllysine. Glu-95 functions as the Proton donor/acceptor in the catalytic mechanism. Positions 129, 167, 171, 221, and 264 each coordinate (3S)-3-hydroxy-3-methylglutaryl-CoA. Cys-129 (acyl-thioester intermediate) is an active-site residue. Asn-167 contacts CoA. Ser-221 lines the CoA pocket. The active-site Proton donor/acceptor is the His-264. The CoA site is built by Lys-269 and Lys-273. The (3S)-3-hydroxy-3-methylglutaryl-CoA site is built by Lys-273, Asn-343, and Ser-377. Lys-273 carries the N6-acetyllysine modification. Positions 488-520 (TATEHIPSPAKKVPRLPATSAESESAVISNGEH) are disordered. Residues Ser-495 and Ser-516 each carry the phosphoserine modification. Polar residues predominate over residues 507–520 (SAESESAVISNGEH).

Belongs to the thiolase-like superfamily. HMG-CoA synthase family. Homodimer.

It is found in the cytoplasm. The enzyme catalyses acetoacetyl-CoA + acetyl-CoA + H2O = (3S)-3-hydroxy-3-methylglutaryl-CoA + CoA + H(+). Its pathway is metabolic intermediate biosynthesis; (R)-mevalonate biosynthesis; (R)-mevalonate from acetyl-CoA: step 2/3. In terms of biological role, catalyzes the condensation of acetyl-CoA with acetoacetyl-CoA to form HMG-CoA, which is converted by HMG-CoA reductase (HMGCR) into mevalonate, a precursor for cholesterol synthesis. This is Hydroxymethylglutaryl-CoA synthase, cytoplasmic from Mus musculus (Mouse).